A 310-amino-acid polypeptide reads, in one-letter code: MLNSWPLAKDLQVLVEIVHSGSFSAAAATLGQTPAFVTKRIQILENTLATTLLNRSARGVALTESGQRCYEHALEILTQYQRLVDDVTQIKTRPEGMIRIGCSFGFGRSHIAPAITELMRNYPELQVHFELFDRQIDLVQDNIDLDIRINDEIPDYYIAHLLTKNKRILCAAPEYLQKYPQPQSLQELSRHDCLVTKERDMTHGIWELGNGQEKKSVKVSGHLSSNSGEIVLQWALEGKGIMLRSEWDVLPFLESGKLVQVLPEYAQSANIWAVYREPLYRSMKLRVCVEFLAAWCQQRLGKPDEGYQVM.

Residues 6–63 (PLAKDLQVLVEIVHSGSFSAAAATLGQTPAFVTKRIQILENTLATTLLNRSARGVALT) enclose the HTH lysR-type domain. The H-T-H motif DNA-binding region spans 23–42 (FSAAAATLGQTPAFVTKRIQ).

It belongs to the LysR transcriptional regulatory family.

Functionally, positive regulator required for L-tartrate-dependent anaerobic growth on glycerol. Induces expression of the ttdA-ttdB-ygjE operon. This Escherichia coli (strain K12) protein is HTH-type transcriptional activator TtdR (ttdR).